Consider the following 415-residue polypeptide: Gamma-glutamyl phosphate reductase (415 aa).

The protein belongs to the gamma-glutamyl phosphate reductase family.

The protein resides in the cytoplasm. The catalysed reaction is L-glutamate 5-semialdehyde + phosphate + NADP(+) = L-glutamyl 5-phosphate + NADPH + H(+). The protein operates within amino-acid biosynthesis; L-proline biosynthesis; L-glutamate 5-semialdehyde from L-glutamate: step 2/2. Functionally, catalyzes the NADPH-dependent reduction of L-glutamate 5-phosphate into L-glutamate 5-semialdehyde and phosphate. The product spontaneously undergoes cyclization to form 1-pyrroline-5-carboxylate. The chain is Gamma-glutamyl phosphate reductase from Psychromonas ingrahamii (strain DSM 17664 / CCUG 51855 / 37).